Here is a 313-residue protein sequence, read N- to C-terminus: Acetaldehyde dehydrogenase 3 (313 aa).

11–14 (SGNI) is an NAD(+) binding site. Cys129 (acyl-thioester intermediate) is an active-site residue. Residues 160-168 (SAGPGTRAN) and Asn288 contribute to the NAD(+) site.

The protein belongs to the acetaldehyde dehydrogenase family.

It carries out the reaction acetaldehyde + NAD(+) + CoA = acetyl-CoA + NADH + H(+). The chain is Acetaldehyde dehydrogenase 3 from Rhizorhabdus wittichii (strain DSM 6014 / CCUG 31198 / JCM 15750 / NBRC 105917 / EY 4224 / RW1) (Sphingomonas wittichii).